The following is a 55-amino-acid chain: Mitochondrial import receptor subunit TOM7 homolog (55 aa).

The Cytoplasmic segment spans residues 1–20 (MVKLSKEAKQRLQQLFKGGQ). A helical transmembrane segment spans residues 21-36 (FAIRWGFIPLVIYLGF). Over 37-55 (KRGADPGMPEPTVLSLLWG) the chain is Mitochondrial intermembrane.

This sequence belongs to the Tom7 family. As to quaternary structure, forms part of the preprotein translocase complex of the outer mitochondrial membrane (TOM complex) which consists of at least 7 different proteins (TOMM5, TOMM6, TOMM7, TOMM20, TOMM22, TOMM40 and TOMM70).

Its subcellular location is the mitochondrion outer membrane. Functionally, required for assembly and stability of the TOM complex. Positive regulator of PRKN translocation to damaged mitochondria. Acts probably by stabilizing PINK1 on the outer membrane of depolarized mitochondria. In Bos taurus (Bovine), this protein is Mitochondrial import receptor subunit TOM7 homolog (TOMM7).